The sequence spans 78 residues: Small ribosomal subunit protein bS18 (78 aa).

The protein belongs to the bacterial ribosomal protein bS18 family. In terms of assembly, part of the 30S ribosomal subunit. Forms a tight heterodimer with protein bS6.

In terms of biological role, binds as a heterodimer with protein bS6 to the central domain of the 16S rRNA, where it helps stabilize the platform of the 30S subunit. The sequence is that of Small ribosomal subunit protein bS18 from Levilactobacillus brevis (strain ATCC 367 / BCRC 12310 / CIP 105137 / JCM 1170 / LMG 11437 / NCIMB 947 / NCTC 947) (Lactobacillus brevis).